A 338-amino-acid polypeptide reads, in one-letter code: Aspartate carbamoyltransferase catalytic subunit (338 aa).

Residues arginine 59 and threonine 60 each contribute to the carbamoyl phosphate site. An L-aspartate-binding site is contributed by lysine 87. Residues arginine 109, histidine 142, and glutamine 145 each coordinate carbamoyl phosphate. L-aspartate-binding residues include arginine 182 and arginine 253. Carbamoyl phosphate-binding residues include glycine 294 and proline 295.

Belongs to the aspartate/ornithine carbamoyltransferase superfamily. ATCase family. As to quaternary structure, heterododecamer (2C3:3R2) of six catalytic PyrB chains organized as two trimers (C3), and six regulatory PyrI chains organized as three dimers (R2).

The enzyme catalyses carbamoyl phosphate + L-aspartate = N-carbamoyl-L-aspartate + phosphate + H(+). It participates in pyrimidine metabolism; UMP biosynthesis via de novo pathway; (S)-dihydroorotate from bicarbonate: step 2/3. Functionally, catalyzes the condensation of carbamoyl phosphate and aspartate to form carbamoyl aspartate and inorganic phosphate, the committed step in the de novo pyrimidine nucleotide biosynthesis pathway. This Prochlorococcus marinus (strain AS9601) protein is Aspartate carbamoyltransferase catalytic subunit.